The following is a 488-amino-acid chain: Stromelysin-3 (488 aa).

A signal peptide spans 1-31; it reads MAPAAWLRSAAARALLPPMLLLLLQPPPLLA. Residues 32–97 constitute a propeptide, activation peptide; it reads RALPPDAHHL…GLSARNRQKR (66 aa). The tract at residues 41 to 93 is disordered; sequence LHAERRGPQPWHAALPSSPAPAPATQEAPRPASSLRPPRCGVPDPSDGLSARN. The segment covering 50 to 79 has biased composition (low complexity); it reads PWHAALPSSPAPAPATQEAPRPASSLRPPR. The Cysteine switch motif lies at 78–85; the sequence is PRCGVPDP. Positions 80 and 166 each coordinate Zn(2+). Residues aspartate 171, glycine 172, glycine 174, and isoleucine 176 each coordinate Ca(2+). 3 residues coordinate Zn(2+): histidine 179, histidine 192, and histidine 215. The active site involves glutamate 216. Positions 219 and 225 each coordinate Zn(2+). Hemopexin repeat units lie at residues 291–339, 340–382, 384–432, and 433–480; these read PDAC…WQGL, PSPV…ELGL, RFPV…WRGV, and PSEI…FFGC. A disulfide bridge links cysteine 294 with cysteine 480.

This sequence belongs to the peptidase M10A family. Ca(2+) serves as cofactor. It depends on Zn(2+) as a cofactor. Post-translationally, the precursor is cleaved by a furin endopeptidase. Specifically expressed in stromal cells of breast carcinomas.

The protein resides in the secreted. It localises to the extracellular space. The protein localises to the extracellular matrix. In terms of biological role, may play an important role in the progression of epithelial malignancies. This is Stromelysin-3 (MMP11) from Homo sapiens (Human).